Here is a 384-residue protein sequence, read N- to C-terminus: 8-amino-7-oxononanoate synthase (384 aa).

Arg-21 provides a ligand contact to substrate. Pyridoxal 5'-phosphate is bound at residue 108 to 109; it reads GF. His-133 lines the substrate pocket. Pyridoxal 5'-phosphate is bound by residues Ser-179, His-207, and Thr-233. At Lys-236 the chain carries N6-(pyridoxal phosphate)lysine. Substrate is bound at residue Thr-352.

Belongs to the class-II pyridoxal-phosphate-dependent aminotransferase family. BioF subfamily. As to quaternary structure, homodimer. The cofactor is pyridoxal 5'-phosphate.

It carries out the reaction 6-carboxyhexanoyl-[ACP] + L-alanine + H(+) = (8S)-8-amino-7-oxononanoate + holo-[ACP] + CO2. The protein operates within cofactor biosynthesis; biotin biosynthesis. Its function is as follows. Catalyzes the decarboxylative condensation of pimeloyl-[acyl-carrier protein] and L-alanine to produce 8-amino-7-oxononanoate (AON), [acyl-carrier protein], and carbon dioxide. The sequence is that of 8-amino-7-oxononanoate synthase from Escherichia fergusonii (strain ATCC 35469 / DSM 13698 / CCUG 18766 / IAM 14443 / JCM 21226 / LMG 7866 / NBRC 102419 / NCTC 12128 / CDC 0568-73).